A 185-amino-acid chain; its full sequence is Ribosome-recycling factor (185 aa).

Residues 127–158 form a disordered region; sequence AVRNTRQDANNKVKKLEKDKEISEDESKKAQE.

Belongs to the RRF family.

Its subcellular location is the cytoplasm. Its function is as follows. Responsible for the release of ribosomes from messenger RNA at the termination of protein biosynthesis. May increase the efficiency of translation by recycling ribosomes from one round of translation to another. This Helicobacter pylori (strain G27) protein is Ribosome-recycling factor.